The primary structure comprises 352 residues: Biotin synthase (352 aa).

The region spanning 44–262 (NRVQVSTLLS…LAVARIMMPK (219 aa)) is the Radical SAM core domain. Residues Cys59, Cys63, and Cys66 each coordinate [4Fe-4S] cluster. 4 residues coordinate [2Fe-2S] cluster: Cys103, Cys134, Cys194, and Arg266.

Belongs to the radical SAM superfamily. Biotin synthase family. As to quaternary structure, homodimer. It depends on [4Fe-4S] cluster as a cofactor. The cofactor is [2Fe-2S] cluster.

The catalysed reaction is (4R,5S)-dethiobiotin + (sulfur carrier)-SH + 2 reduced [2Fe-2S]-[ferredoxin] + 2 S-adenosyl-L-methionine = (sulfur carrier)-H + biotin + 2 5'-deoxyadenosine + 2 L-methionine + 2 oxidized [2Fe-2S]-[ferredoxin]. It functions in the pathway cofactor biosynthesis; biotin biosynthesis; biotin from 7,8-diaminononanoate: step 2/2. Its function is as follows. Catalyzes the conversion of dethiobiotin (DTB) to biotin by the insertion of a sulfur atom into dethiobiotin via a radical-based mechanism. The chain is Biotin synthase from Pseudomonas aeruginosa (strain LESB58).